Here is a 569-residue protein sequence, read N- to C-terminus: Proline--tRNA ligase (569 aa).

It belongs to the class-II aminoacyl-tRNA synthetase family. ProS type 1 subfamily. Homodimer.

Its subcellular location is the cytoplasm. It catalyses the reaction tRNA(Pro) + L-proline + ATP = L-prolyl-tRNA(Pro) + AMP + diphosphate. In terms of biological role, catalyzes the attachment of proline to tRNA(Pro) in a two-step reaction: proline is first activated by ATP to form Pro-AMP and then transferred to the acceptor end of tRNA(Pro). As ProRS can inadvertently accommodate and process non-cognate amino acids such as alanine and cysteine, to avoid such errors it has two additional distinct editing activities against alanine. One activity is designated as 'pretransfer' editing and involves the tRNA(Pro)-independent hydrolysis of activated Ala-AMP. The other activity is designated 'posttransfer' editing and involves deacylation of mischarged Ala-tRNA(Pro). The misacylated Cys-tRNA(Pro) is not edited by ProRS. In Dehalococcoides mccartyi (strain ATCC BAA-2100 / JCM 16839 / KCTC 5957 / BAV1), this protein is Proline--tRNA ligase.